The primary structure comprises 496 residues: Pseudooxynicotine dehydrogenase (496 aa).

Positions 1–42 (MTKDGDEGSKSGVSRRKFLGSAAVGVATAGIASQLLTLSAPA) form a signal peptide, tat-type signal. Positions 69, 88, 96, 113, 285, 461, and 471 each coordinate FAD.

The protein belongs to the flavin monoamine oxidase family. As to quaternary structure, homodimer. Requires FAD as cofactor. In terms of processing, predicted to be exported by the Tat system. The position of the signal peptide cleavage has not been experimentally proven.

The protein resides in the periplasm. It catalyses the reaction pseudooxynicotine + 2 Fe(III)-[cytochrome c] + H2O = 4-oxo-4-(pyridin-3-yl)butanal + methylamine + 2 Fe(II)-[cytochrome c] + 2 H(+). Its pathway is alkaloid degradation; nicotine degradation. Its activity is regulated as follows. Strongly inhibited by Na(2)MoO(4) and FeCl(3). Activity is nearly twice as high in the presence of Na(2)WO(4). Its function is as follows. Involved in nicotine degradation. Catalyzes the deamination of pseudooxynicotine to 3-succinoylsemialdehyde-pyridine. Functions as a dehydrogenase that uses the c-type cytochrome protein CycN as the physiological electron acceptor. O(2) is a poor electron acceptor. Pnao is oxidized by CycN 230 times faster than O(2) at equivalent oxidant concentrations. The polypeptide is Pseudooxynicotine dehydrogenase (Pseudomonas putida (strain DSM 28022 / S16)).